The chain runs to 645 residues: Zinc finger and SCAN domain-containing protein 2 (645 aa).

Disordered stretches follow at residues 1-25, 37-75, and 193-230; these read MMAA…EEDR, DDSW…GPQG, and EMPE…HGEV. Residues 59–132 form the SCAN box domain; it reads SAGKGSPQEE…ALVEDLTQTL (74 aa). A compositionally biased stretch (basic and acidic residues) spans 199-214; the sequence is SAQHSDGESDFERDAG. C2H2-type zinc fingers lie at residues 253-275, 281-303, 309-331, 337-359, 365-387, 393-415, 421-443, 449-471, 477-499, 505-527, 533-555, 561-583, 589-611, and 617-639; these read YECP…ERTH, YKCD…QTTH, YKCR…QRIH, FQCA…QRTH, YSCP…QGIH, YECK…QRIH, YKCT…RRTH, YQCS…RRTH, YKCG…QGMH, YECL…QRIH, YKCS…QQTH, YKCL…QRAH, YRCP…QRIH, and YKCP…QRTH.

It belongs to the krueppel C2H2-type zinc-finger protein family.

It localises to the nucleus. May be involved in transcriptional regulation during the post-meiotic stages of spermatogenesis. The protein is Zinc finger and SCAN domain-containing protein 2 (ZSCAN2) of Pongo abelii (Sumatran orangutan).